A 186-amino-acid polypeptide reads, in one-letter code: Signal peptidase I P (186 aa).

At 1–15 (MTKEKVFKKKSSILE) the chain is on the cytoplasmic side. The chain crosses the membrane as a helical span at residues 16–35 (WGKAIVIAVILALLIRNFLF). Residues 36–186 (EPYVVEGKSM…FPFSNMRKAK (151 aa)) lie on the Extracellular side of the membrane. Residues serine 44 and lysine 86 contribute to the active site.

Belongs to the peptidase S26 family.

It is found in the cell membrane. It carries out the reaction Cleavage of hydrophobic, N-terminal signal or leader sequences from secreted and periplasmic proteins.. This Bacillus subtilis subsp. natto protein is Signal peptidase I P (sipP).